The primary structure comprises 295 residues: Acetylglutamate kinase (295 aa).

Residues 64-65 (GG), R86, and N190 contribute to the substrate site.

Belongs to the acetylglutamate kinase family. ArgB subfamily.

It localises to the cytoplasm. It catalyses the reaction N-acetyl-L-glutamate + ATP = N-acetyl-L-glutamyl 5-phosphate + ADP. Its pathway is amino-acid biosynthesis; L-arginine biosynthesis; N(2)-acetyl-L-ornithine from L-glutamate: step 2/4. Functionally, catalyzes the ATP-dependent phosphorylation of N-acetyl-L-glutamate. The sequence is that of Acetylglutamate kinase from Oleidesulfovibrio alaskensis (strain ATCC BAA-1058 / DSM 17464 / G20) (Desulfovibrio alaskensis).